Consider the following 174-residue polypeptide: Crossover junction endodeoxyribonuclease RuvC (174 aa).

Residues Asp8, Glu67, and Asp139 contribute to the active site. The Mg(2+) site is built by Asp8, Glu67, and Asp139.

It belongs to the RuvC family. As to quaternary structure, homodimer which binds Holliday junction (HJ) DNA. The HJ becomes 2-fold symmetrical on binding to RuvC with unstacked arms; it has a different conformation from HJ DNA in complex with RuvA. In the full resolvosome a probable DNA-RuvA(4)-RuvB(12)-RuvC(2) complex forms which resolves the HJ. Requires Mg(2+) as cofactor.

The protein resides in the cytoplasm. The catalysed reaction is Endonucleolytic cleavage at a junction such as a reciprocal single-stranded crossover between two homologous DNA duplexes (Holliday junction).. The RuvA-RuvB-RuvC complex processes Holliday junction (HJ) DNA during genetic recombination and DNA repair. Endonuclease that resolves HJ intermediates. Cleaves cruciform DNA by making single-stranded nicks across the HJ at symmetrical positions within the homologous arms, yielding a 5'-phosphate and a 3'-hydroxyl group; requires a central core of homology in the junction. The consensus cleavage sequence is 5'-(A/T)TT(C/G)-3'. Cleavage occurs on the 3'-side of the TT dinucleotide at the point of strand exchange. HJ branch migration catalyzed by RuvA-RuvB allows RuvC to scan DNA until it finds its consensus sequence, where it cleaves and resolves the cruciform DNA. This is Crossover junction endodeoxyribonuclease RuvC from Stutzerimonas stutzeri (strain A1501) (Pseudomonas stutzeri).